The following is a 585-amino-acid chain: A-type ATP synthase subunit A (585 aa).

231–238 is a binding site for ATP; that stretch reads GPFGSGKT.

This sequence belongs to the ATPase alpha/beta chains family. In terms of assembly, has multiple subunits with at least A(3), B(3), C, D, E, F, H, I and proteolipid K(x).

It is found in the cell membrane. The enzyme catalyses ATP + H2O + 4 H(+)(in) = ADP + phosphate + 5 H(+)(out). Its function is as follows. Component of the A-type ATP synthase that produces ATP from ADP in the presence of a proton gradient across the membrane. The A chain is the catalytic subunit. This is A-type ATP synthase subunit A from Desulfurococcus sp. (strain SY).